A 390-amino-acid polypeptide reads, in one-letter code: MGQRLSGGRSCLDVPGRFLPQPPPPPPPVRRKLALLFAMLCIWLYMFLYSCAGSCTAAPGLLLLGSGSRATHAQPALVTAPNETSPKMPFRAPPANSLAAGKDKTVGAGSQEEQSPEAPDSPSPISSFFSGAGSKQLPQAIIIGVKKGGTRALLEFLRVHPDVRAVGAEPHFFDRSYHKGLAWYRDLMPRTLKGQITMEKTPSYFVTREAPARISAMSKDTKLIVVVRDPVTRAISDYTQTLSKRPDIPSFESLTFRNRSAGLIDTSWSAIQIGLYAKHLEPWLRHFPLGQMLFVSGERLVSDPAGELRRVQDFLGLKRIITDKHFYFNQTKGFPCLKKAEGSGKPHCLGKTKGRAHPTIAREVLRQLRDFYRPFNRKFYQMTGRDFGWD.

The segment at 1 to 25 (MGQRLSGGRSCLDVPGRFLPQPPPP) is disordered. The Cytoplasmic segment spans residues 1-32 (MGQRLSGGRSCLDVPGRFLPQPPPPPPPVRRK). Residues 33–53 (LALLFAMLCIWLYMFLYSCAG) traverse the membrane as a helical; Signal-anchor for type II membrane protein segment. Topologically, residues 54 to 390 (SCTAAPGLLL…QMTGRDFGWD (337 aa)) are lumenal. Residues 79 to 125 (TAPNETSPKMPFRAPPANSLAAGKDKTVGAGSQEEQSPEAPDSPSPI) form a disordered region. Asn-82 carries an N-linked (GlcNAc...) asparagine glycan. 147-151 (KGGTR) serves as a coordination point for 3'-phosphoadenylyl sulfate. Substrate-binding positions include 169-175 (EPHFFDR) and 200-203 (KTPS). 3'-phosphoadenylyl sulfate-binding residues include Arg-228 and Ser-236. The N-linked (GlcNAc...) asparagine glycan is linked to Asn-258. 268–269 (WS) contacts substrate. A glycan (N-linked (GlcNAc...) asparagine) is linked at Asn-329. Cys-336 and Cys-348 are disulfide-bonded. Residue 353–357 (KGRAH) coordinates 3'-phosphoadenylyl sulfate.

Belongs to the sulfotransferase 1 family.

Its subcellular location is the golgi apparatus membrane. It carries out the reaction alpha-D-glucosaminyl-[heparan sulfate](n) + 3'-phosphoadenylyl sulfate = 3-sulfo-alpha-D-glucosaminyl-[heparan sulfate](n) + adenosine 3',5'-bisphosphate + H(+). Functionally, sulfotransferase that utilizes 3'-phospho-5'-adenylyl sulfate (PAPS) to catalyze the transfer of a sulfo group to an N-unsubstituted glucosamine linked to a 2-O-sulfo iduronic acid unit on heparan sulfate. Catalyzes the O-sulfation of glucosamine in IdoUA2S-GlcNS and also in IdoUA2S-GlcNH2. Unlike HS3ST1/3-OST-1, does not convert non-anticoagulant heparan sulfate to anticoagulant heparan sulfate. The polypeptide is Heparan sulfate glucosamine 3-O-sulfotransferase 3B1 (Hs3st3b1) (Mus musculus (Mouse)).